A 487-amino-acid chain; its full sequence is N-succinylglutamate 5-semialdehyde dehydrogenase (487 aa).

Position 221 to 226 (221 to 226 (GSSRTG)) interacts with NAD(+). Catalysis depends on residues glutamate 244 and cysteine 278.

This sequence belongs to the aldehyde dehydrogenase family. AstD subfamily.

The enzyme catalyses N-succinyl-L-glutamate 5-semialdehyde + NAD(+) + H2O = N-succinyl-L-glutamate + NADH + 2 H(+). The protein operates within amino-acid degradation; L-arginine degradation via AST pathway; L-glutamate and succinate from L-arginine: step 4/5. Its function is as follows. Catalyzes the NAD-dependent reduction of succinylglutamate semialdehyde into succinylglutamate. The chain is N-succinylglutamate 5-semialdehyde dehydrogenase from Pseudomonas putida (strain W619).